Reading from the N-terminus, the 1017-residue chain is MEKLDRYLQEHFDVPAKNPSEEAQRRWRQAVGTIVKNRRRRFRWVPDLDRRSLDKAKVRSTQEKIRVALYVQQAALIFSDDELALITSKHDSKALKMHGGVDGISKKVRSSFDHGICASDLDTRQNIYGVNRYAEKPSRSFWMFVWDAFQDMTLIILMVCALLSVAVGLATEGWPKGMYDGLGIILSIFLVVMVTAVSDYKQSLQFKELDNEKKKIFIHVTRDGRRQKISIYDLVVGDIVHLSIGDQVPADGLYIHGYSLLIDESSLSGESDPVYVSQDKPFILAGTKVQDGSAKMIVTAVGMRTEWGKLMSTLSEGGEDETPLQVKLNGVATVIGKIGLVFAILTFLVLLVRFLIDKGMTVGLLKWYSTDALTIVNYFATAVTIIVVAVPEGLPLAVTLSLAFAMKKLMNDKALVRHLSACETMGSAGTICTDKTGTLTTNYMVVDKIWISEVSKSVTSNTISGELNSVVSSRTLSLLLQGIFENTSAEVVKEKDGKQTVLGTPTERAILEFGLGLEGVHDAEYSACTKVKVEPFNSVKKKMAVLISLPSGTSRWFCKGASEIILQMCDMMVDGDGNAIPLSEAQRKNILDTINSFASDALRTLCLAYKEVDDDIDDNADSPTSGFTLIAIFGIKDPVRPGVKDAVKTCMSAGITVRMVTGDNINTAKAIAKECGILTEDGVAIEGPEFHSKSPEEMRDLIPNIQVMARSLPLDKHTLVTNLRGMFDEVVSVTGDGTNDAPALHEADIGLAMGIAGTEVAKESADVIVLDDNFTTIINVARWGRAVYINIQKFVQFQLTVNIVALVINFVSACITGSAPLTAVQLLWVNMIMDTLGALALATEPPNDEMMKRPPVRKGESFITKVMWRNIMGQSLYQLFVLGALMFGGESLLNIKGADSKSIINTLIFNSFVFCQVFNEINSREMQKINVFRGIISNWIFIAVIAATVAFQVVIIEFLGTFASTVPLNWQHWLLSVGLGSISLIVGVILKCIPVGSGETSATPNGYRPLANGPDDI.

Residues 1–153 (MEKLDRYLQE…FVWDAFQDMT (153 aa)) are Cytoplasmic-facing. 2 consecutive transmembrane segments (helical) span residues 154–174 (LIILMVCALLSVAVGLATEGW) and 177–197 (GMYDGLGIILSIFLVVMVTAV). The Cytoplasmic segment spans residues 198–228 (SDYKQSLQFKELDNEKKKIFIHVTRDGRRQK). The next 2 helical transmembrane spans lie at 229–249 (ISIYDLVVGDIVHLSIGDQVP) and 331–351 (VATVIGKIGLVFAILTFLVLL). Over 352-384 (VRFLIDKGMTVGLLKWYSTDALTIVNYFATAVT) the chain is Cytoplasmic. A helical transmembrane segment spans residues 385–405 (IIVVAVPEGLPLAVTLSLAFA). D434 serves as the catalytic 4-aspartylphosphate intermediate. Mg(2+)-binding residues include D736 and D740. The helical transmembrane segment at 803 to 823 (IVALVINFVSACITGSAPLTA) threads the bilayer. Topologically, residues 824 to 825 (VQ) are cytoplasmic. Helical transmembrane passes span 826-846 (LLWVNMIMDTLGALALATEPP) and 875-895 (SLYQLFVLGALMFGGESLLNI). Topologically, residues 896 to 938 (KGADSKSIINTLIFNSFVFCQVFNEINSREMQKINVFRGIISN) are cytoplasmic. The next 2 helical transmembrane spans lie at 939 to 959 (WIFIAVIAATVAFQVVIIEFL) and 973 to 993 (WLLSVGLGSISLIVGVILKCI). The Cytoplasmic portion of the chain corresponds to 994-1017 (PVGSGETSATPNGYRPLANGPDDI).

This sequence belongs to the cation transport ATPase (P-type) (TC 3.A.3) family. Type IIB subfamily.

It localises to the membrane. It catalyses the reaction Ca(2+)(in) + ATP + H2O = Ca(2+)(out) + ADP + phosphate + H(+). Its activity is regulated as follows. Activated by calmodulin. Its function is as follows. This magnesium-dependent enzyme catalyzes the hydrolysis of ATP coupled with the translocation of calcium from the cytosol out of the cell, into the endoplasmic reticulum, or into organelles. The sequence is that of Probable calcium-transporting ATPase 8, plasma membrane-type from Oryza sativa subsp. japonica (Rice).